The primary structure comprises 300 residues: Iron-dependent extradiol dioxygenase (300 aa).

VOC domains lie at 5–120 (SLGY…VFHG) and 142–270 (GMGH…FGCE). A Fe cation-binding site is contributed by histidine 145. Histidine 200, histidine 215, aspartate 250, and tyrosine 256 together coordinate substrate. Fe cation is bound at residue histidine 215. Glutamate 266 contacts Fe cation.

This sequence belongs to the extradiol ring-cleavage dioxygenase family. As to quaternary structure, homodimer, but may form a homooctamer. Fe(2+) serves as cofactor.

It catalyses the reaction 3,4-dihydroxy-9,10-secoandrosta-1,3,5(10)-triene-9,17-dione + O2 = (1E,2Z)-3-hydroxy-5,9,17-trioxo-4,5:9,10-disecoandrosta-1(10),2-dien-4-oate + H(+). It participates in steroid metabolism; cholesterol metabolism. In terms of biological role, catalyzes the meta-cleavage of 3,4-dihydroxy-9,10-seconandrost-1,3,5(10)-triene-9,17-dione (3,4-DHSA) to produce 4,5-9,10-diseco-3-hydroxy-5,9,17-trioxoandrosta-1(10),2-diene-4-oic acid (4,9-DSHA). This Mycobacterium tuberculosis (strain CDC 1551 / Oshkosh) protein is Iron-dependent extradiol dioxygenase (hsaC).